The following is an 86-amino-acid chain: Translation initiation factor IF-1 (86 aa).

The S1-like domain maps to 1 to 72 (MPKDDVIKME…TKGRIVYRKK (72 aa)).

It belongs to the IF-1 family. In terms of assembly, component of the 30S ribosomal translation pre-initiation complex which assembles on the 30S ribosome in the order IF-2 and IF-3, IF-1 and N-formylmethionyl-tRNA(fMet); mRNA recruitment can occur at any time during PIC assembly.

The protein resides in the cytoplasm. In terms of biological role, one of the essential components for the initiation of protein synthesis. Stabilizes the binding of IF-2 and IF-3 on the 30S subunit to which N-formylmethionyl-tRNA(fMet) subsequently binds. Helps modulate mRNA selection, yielding the 30S pre-initiation complex (PIC). Upon addition of the 50S ribosomal subunit IF-1, IF-2 and IF-3 are released leaving the mature 70S translation initiation complex. This Pseudothermotoga lettingae (strain ATCC BAA-301 / DSM 14385 / NBRC 107922 / TMO) (Thermotoga lettingae) protein is Translation initiation factor IF-1.